The sequence spans 192 residues: Ribosomal RNA small subunit methyltransferase G (192 aa).

Residues glycine 59, 111 to 112, and arginine 124 each bind S-adenosyl-L-methionine; that span reads IE.

This sequence belongs to the methyltransferase superfamily. RNA methyltransferase RsmG family.

The protein resides in the cytoplasm. Functionally, specifically methylates the N7 position of a guanine in 16S rRNA. This is Ribosomal RNA small subunit methyltransferase G from Mycoplasma genitalium (strain ATCC 33530 / DSM 19775 / NCTC 10195 / G37) (Mycoplasmoides genitalium).